A 416-amino-acid polypeptide reads, in one-letter code: Enterobactin exporter EntS (416 aa).

At 1–21 the chain is on the cytoplasmic side; it reads MNKQSWLLNLSLLKTHPAFRA. The helical transmembrane segment at 22-42 threads the bilayer; sequence VFLARFISIVSLGLLGVAVPV. At 43–55 the chain is on the periplasmic side; it reads QIQMMTHSTWQVG. The helical transmembrane segment at 56–76 threads the bilayer; the sequence is LSVTLTGGAMFVGLMVGGVLA. Residues 77–83 lie on the Cytoplasmic side of the membrane; the sequence is DRYERKK. The helical transmembrane segment at 84-104 threads the bilayer; sequence VILLARGTCGIGFIGLCLNAL. Topologically, residues 105-109 are periplasmic; the sequence is LPEPS. A helical transmembrane segment spans residues 110–130; the sequence is LLAIYLLGLWDGFFASLGVTA. Residues 131–156 lie on the Cytoplasmic side of the membrane; it reads LLAATPALVGRENLMQAGAITMLTVR. A helical transmembrane segment spans residues 157–177; sequence LGSVISPMIGGLLLATGGVAW. Position 178 (N178) is a topological domain, periplasmic. The chain crosses the membrane as a helical span at residues 179–199; that stretch reads YGLAAAGTFITLLPLLSLPAL. Residues 200 to 218 lie on the Cytoplasmic side of the membrane; it reads PPPPQPREHPLKSLLAGFR. A helical transmembrane segment spans residues 219–239; sequence FLLASPLVGGIALLGGLLTMA. Residues 240 to 256 are Periplasmic-facing; sequence SAVRVLYPALADNWQMS. Residues 257–277 form a helical membrane-spanning segment; sequence AAQIGFLYAAIPLGAAIGALT. The Cytoplasmic portion of the chain corresponds to 278-287; sequence SGKLAHSVRP. The chain crosses the membrane as a helical span at residues 288-307; sequence GLLMLLSTLGAFLAIGLFGL. The Periplasmic portion of the chain corresponds to 308-313; it reads MPMWIL. A helical membrane pass occupies residues 314–336; the sequence is GVVCLALFGWLSAVSSLLQYTML. The Cytoplasmic segment spans residues 337-356; it reads QTQTPEAMLGRINGLWTAQN. A helical membrane pass occupies residues 357-377; sequence VTGDAIGAALLGGLGAMMTPV. A378 is a topological domain (periplasmic). The chain crosses the membrane as a helical span at residues 379 to 399; the sequence is SASASGFGLLIIGVLLLLVLV. At 400–416 the chain is on the cytoplasmic side; the sequence is ELRRFRQTPPQVTASDS.

Belongs to the major facilitator superfamily. EntS (TC 2.A.1.38) family.

It is found in the cell inner membrane. Functionally, component of an export pathway for enterobactin. The polypeptide is Enterobactin exporter EntS (Escherichia coli O6:H1 (strain CFT073 / ATCC 700928 / UPEC)).